Consider the following 117-residue polypeptide: Large ribosomal subunit protein bL20 (117 aa).

This sequence belongs to the bacterial ribosomal protein bL20 family.

Its function is as follows. Binds directly to 23S ribosomal RNA and is necessary for the in vitro assembly process of the 50S ribosomal subunit. It is not involved in the protein synthesizing functions of that subunit. The sequence is that of Large ribosomal subunit protein bL20 from Leptospira interrogans serogroup Icterohaemorrhagiae serovar copenhageni (strain Fiocruz L1-130).